The sequence spans 899 residues: MKLDRMRVGSRINDEEAMPLTAPESRARDSIDSSSTASISLTLVEGASHATTEPSKPAHNHNGRTQGNYAEKYRDDLEEDWEENNYIPTNGKSSQRRTLIVFWLLVALCVGGWAVAFLFFVTSPGNKTSTSPHSGSNSPEGDVTKPGIPATGKKIPLDDAIGGVWSPAEHTISWIAGAKGEDGLLLQKSEGGTGPYLHVEDVRNIHGTQSNNNSIVLMKESVFFVNDERISPEKVWPSPDLKTVLAMTREKKNWRHSFTGLYWLFDVETQTAQPLDPDAPNGRIQLATWSPTSDAVAFTRDNNLYIRNLTSKSVKAITTDGGTNLFYGIPDWVYEEEVFEGNIATWWSLDGKYISYLRTNETLVPEFPIDFYLSSPPGYSPKPGEESYPYVQQIKYPKAGAPNPTVSLQFYDIEREESFSVDVKDTLKDDDRLIVEVIPGSKGKVLVRETNRESYIVKVAVIDANKREGKIVRSDNIDEIDGGWVEPSHTTTYIPADPSAGRPDDGYIDTVIHEGYIHLAYFTPLENPKPKMLTTGKWEVVAAPSGVDLKNNVVYFVATKESPIDRHVYSVKLDGSELRMLKDSDKSAYYDVSFSHGAGYMLLKYQGPQIPWQKLISSPSNADNYIEILEENKKLAKLSNEFALPSLHYSTITVDGFELPVVERRPPNFDETKKYPVLFQLYGGPGSQTVNKKFLVNFQTYVASNLGYIVVTVDGRGTGFNGRKFKCIVRRNLGHYEAHDQIQAAKAWGKKPYVDKTRMAIWGWSYGGFMTLKTLEQDAGETFQYGMAVAPVTNWRYYDSVYTERYMHMPQNNEGGYENASISNATNLSQNTRFLIMHGSADDNVHFQNTLTLLDKLDILGVHNYDMHVFPDSNHGIYFHHAYKMVHQRKYFNLSFLGH.

Residues 1–69 (MKLDRMRVGS…NHNGRTQGNY (69 aa)) are disordered. Residues 1-99 (MKLDRMRVGS…NGKSSQRRTL (99 aa)) lie on the Cytoplasmic side of the membrane. Low complexity predominate over residues 32–43 (DSSSTASISLTL). The chain crosses the membrane as a helical; Signal-anchor for type II membrane protein span at residues 100–120 (IVFWLLVALCVGGWAVAFLFF). Residues 121–899 (VTSPGNKTST…KYFNLSFLGH (779 aa)) are Vacuolar-facing. Polar residues predominate over residues 128–139 (TSTSPHSGSNSP). The tract at residues 128–149 (TSTSPHSGSNSPEGDVTKPGIP) is disordered. N-linked (GlcNAc...) asparagine glycans are attached at residues N212, N308, and N360. Catalysis depends on S765, which acts as the Charge relay system. N-linked (GlcNAc...) asparagine glycosylation is found at N819, N824, and N827. Active-site charge relay system residues include D842 and H875. N893 carries N-linked (GlcNAc...) asparagine glycosylation.

Belongs to the peptidase S9B family.

It localises to the vacuole membrane. It carries out the reaction Release of an N-terminal dipeptide, Xaa-Yaa-|-Zaa-, from a polypeptide, preferentially when Yaa is Pro, provided Zaa is neither Pro nor hydroxyproline.. Its function is as follows. Type IV dipeptidyl-peptidase which removes N-terminal dipeptides sequentially from polypeptides having unsubstituted N-termini provided that the penultimate residue is proline. The chain is Probable dipeptidyl-aminopeptidase B (DAPB) from Trichophyton verrucosum (strain HKI 0517).